Consider the following 155-residue polypeptide: 2-C-methyl-D-erythritol 2,4-cyclodiphosphate synthase (155 aa).

A divalent metal cation is bound by residues D8 and H10. 4-CDP-2-C-methyl-D-erythritol 2-phosphate contacts are provided by residues 8-10 (DVH) and 34-35 (HS). A divalent metal cation is bound at residue H42. Residues 56 to 58 (DIG), 61 to 65 (FPDSD), 100 to 106 (AQKPKML), 132 to 135 (TTEE), F139, and K142 contribute to the 4-CDP-2-C-methyl-D-erythritol 2-phosphate site.

This sequence belongs to the IspF family. In terms of assembly, homotrimer. The cofactor is a divalent metal cation.

It carries out the reaction 4-CDP-2-C-methyl-D-erythritol 2-phosphate = 2-C-methyl-D-erythritol 2,4-cyclic diphosphate + CMP. Its pathway is isoprenoid biosynthesis; isopentenyl diphosphate biosynthesis via DXP pathway; isopentenyl diphosphate from 1-deoxy-D-xylulose 5-phosphate: step 4/6. Involved in the biosynthesis of isopentenyl diphosphate (IPP) and dimethylallyl diphosphate (DMAPP), two major building blocks of isoprenoid compounds. Catalyzes the conversion of 4-diphosphocytidyl-2-C-methyl-D-erythritol 2-phosphate (CDP-ME2P) to 2-C-methyl-D-erythritol 2,4-cyclodiphosphate (ME-CPP) with a corresponding release of cytidine 5-monophosphate (CMP). The chain is 2-C-methyl-D-erythritol 2,4-cyclodiphosphate synthase from Clostridium botulinum (strain Okra / Type B1).